The primary structure comprises 130 residues: Small ribosomal subunit protein uS11 (130 aa).

Positions 1–15 (MARPTKKSGPRKQKR) are enriched in basic residues. Residues 1-21 (MARPTKKSGPRKQKRNVPSGV) are disordered.

Belongs to the universal ribosomal protein uS11 family. In terms of assembly, part of the 30S ribosomal subunit. Interacts with proteins S7 and S18. Binds to IF-3.

In terms of biological role, located on the platform of the 30S subunit, it bridges several disparate RNA helices of the 16S rRNA. Forms part of the Shine-Dalgarno cleft in the 70S ribosome. In Synechococcus elongatus (strain ATCC 33912 / PCC 7942 / FACHB-805) (Anacystis nidulans R2), this protein is Small ribosomal subunit protein uS11.